A 375-amino-acid chain; its full sequence is Growth/differentiation factor 8 (375 aa).

The N-terminal stretch at Met1–Ala18 is a signal peptide. Residues Gly19–Arg266 constitute a propeptide that is removed on maturation. 2 N-linked (GlcNAc...) asparagine glycosylation sites follow: Asn48 and Asn71. 4 cysteine pairs are disulfide-bonded: Cys272-Cys282, Cys281-Cys340, Cys309-Cys372, and Cys313-Cys374.

Belongs to the TGF-beta family. As to quaternary structure, homodimer; disulfide-linked. Interacts with WFIKKN2, leading to inhibit its activity. Interacts with FSTL3. Synthesized as large precursor molecule that undergoes proteolytic cleavage to generate an N-terminal propeptide and a disulfide linked C-terminal dimer, which is the biologically active molecule. The circulating form consists of a latent complex of the C-terminal dimer and other proteins, including its propeptide, which maintain the C-terminal dimer in a latent, inactive state. Ligand activation requires additional cleavage of the prodomain by a tolloid-like metalloproteinase.

The protein localises to the secreted. Functionally, acts specifically as a negative regulator of skeletal muscle growth. The chain is Growth/differentiation factor 8 (MSTN) from Aepyceros melampus (Impala).